Reading from the N-terminus, the 172-residue chain is Large ribosomal subunit protein uL10 (172 aa).

It belongs to the universal ribosomal protein uL10 family. In terms of assembly, part of the ribosomal stalk of the 50S ribosomal subunit. The N-terminus interacts with L11 and the large rRNA to form the base of the stalk. The C-terminus forms an elongated spine to which L12 dimers bind in a sequential fashion forming a multimeric L10(L12)X complex.

In terms of biological role, forms part of the ribosomal stalk, playing a central role in the interaction of the ribosome with GTP-bound translation factors. The chain is Large ribosomal subunit protein uL10 from Francisella tularensis subsp. mediasiatica (strain FSC147).